The primary structure comprises 305 residues: LysM and putative peptidoglycan-binding domain-containing protein 3 (305 aa).

Over 1 to 216 the chain is Extracellular; it reads MAGRNQNRTV…PYYGADWGIG (216 aa). Residues Asn-7 and Asn-26 are each glycosylated (N-linked (GlcNAc...) asparagine). Ser-55 is subject to Phosphoserine. In terms of domain architecture, LysM spans 65–109; the sequence is LTKDIQEGDTLNAVALQYCCTVADIKRVNNLISDQDFFALRSIKI. N-linked (GlcNAc...) asparagine glycosylation is present at Asn-199. The helical transmembrane segment at 217–237 threads the bilayer; the sequence is WWTAVVIMLIVGIITPVFYLL. Residues 238–305 lie on the Cytoplasmic side of the membrane; the sequence is YYEILAKVDV…PQAHDAQHKT (68 aa). A disordered region spans residues 253–305; it reads VGSSHLHPGLTPPTQHREMENEIGPTKGIPVGQQDDHKLYRQDPQAHDAQHKT. Residues 286–305 are compositionally biased toward basic and acidic residues; sequence QDDHKLYRQDPQAHDAQHKT.

It localises to the cell membrane. Its subcellular location is the golgi apparatus. In terms of biological role, essential for Golgi structural integrity. The polypeptide is LysM and putative peptidoglycan-binding domain-containing protein 3 (Lysmd3) (Mus musculus (Mouse)).